The chain runs to 89 residues: Cell division topological specificity factor (89 aa).

This sequence belongs to the MinE family.

Functionally, prevents the cell division inhibition by proteins MinC and MinD at internal division sites while permitting inhibition at polar sites. This ensures cell division at the proper site by restricting the formation of a division septum at the midpoint of the long axis of the cell. In Brucella anthropi (strain ATCC 49188 / DSM 6882 / CCUG 24695 / JCM 21032 / LMG 3331 / NBRC 15819 / NCTC 12168 / Alc 37) (Ochrobactrum anthropi), this protein is Cell division topological specificity factor.